A 457-amino-acid polypeptide reads, in one-letter code: Cystathionine beta-lyase (457 aa).

The segment at 1 to 41 (MSTPNSDSPAAQAAKKVFSRLDLDGHNLPPSPAPSSPHNGR) is disordered.

It belongs to the trans-sulfuration enzymes family. It depends on pyridoxal 5'-phosphate as a cofactor.

Its subcellular location is the cytoplasm. It localises to the nucleus. It carries out the reaction L,L-cystathionine + H2O = L-homocysteine + pyruvate + NH4(+). It catalyses the reaction an S-substituted L-cysteine + H2O = a thiol + pyruvate + NH4(+). Its pathway is amino-acid biosynthesis; L-methionine biosynthesis via de novo pathway; L-homocysteine from L-cystathionine: step 1/1. Its function is as follows. Involved in de novo synthesis of methionine. The polypeptide is Cystathionine beta-lyase (met-2) (Neurospora crassa (strain ATCC 24698 / 74-OR23-1A / CBS 708.71 / DSM 1257 / FGSC 987)).